The sequence spans 361 residues: Chorismate synthase (361 aa).

R48 contributes to the NADP(+) binding site. Residues 125-127 (RSS), 238-239 (NA), G278, 293-297 (KPTSS), and R319 each bind FMN.

The protein belongs to the chorismate synthase family. As to quaternary structure, homotetramer. It depends on FMNH2 as a cofactor.

It catalyses the reaction 5-O-(1-carboxyvinyl)-3-phosphoshikimate = chorismate + phosphate. It functions in the pathway metabolic intermediate biosynthesis; chorismate biosynthesis; chorismate from D-erythrose 4-phosphate and phosphoenolpyruvate: step 7/7. In terms of biological role, catalyzes the anti-1,4-elimination of the C-3 phosphate and the C-6 proR hydrogen from 5-enolpyruvylshikimate-3-phosphate (EPSP) to yield chorismate, which is the branch point compound that serves as the starting substrate for the three terminal pathways of aromatic amino acid biosynthesis. This reaction introduces a second double bond into the aromatic ring system. The chain is Chorismate synthase from Aliivibrio fischeri (strain ATCC 700601 / ES114) (Vibrio fischeri).